The chain runs to 161 residues: RNA pyrophosphohydrolase (161 aa).

The Nudix hydrolase domain occupies 12-154; that stretch reads PYRPGVGMMI…KRKLYQAVVK (143 aa). Positions 46 to 67 match the Nudix box motif; the sequence is GGIVPGETPSIAAMREMLEEIG.

It belongs to the Nudix hydrolase family. RppH subfamily. A divalent metal cation is required as a cofactor.

In terms of biological role, accelerates the degradation of transcripts by removing pyrophosphate from the 5'-end of triphosphorylated RNA, leading to a more labile monophosphorylated state that can stimulate subsequent ribonuclease cleavage. The polypeptide is RNA pyrophosphohydrolase (Rickettsia conorii (strain ATCC VR-613 / Malish 7)).